Here is a 431-residue protein sequence, read N- to C-terminus: COBRA-like protein 4 (431 aa).

A signal peptide spans methionine 1–alanine 20. Residues asparagine 29, asparagine 154, asparagine 162, asparagine 201, asparagine 226, asparagine 306, asparagine 321, and asparagine 340 are each glycosylated (N-linked (GlcNAc...) asparagine). Asparagine 414 carries the GPI-anchor amidated asparagine lipid modification. Positions phenylalanine 415–tryptophan 431 are cleaved as a propeptide — removed in mature form.

The protein belongs to the COBRA family. In terms of tissue distribution, expressed in roots, stems, leaves, flowers and siliques.

It is found in the cell membrane. The chain is COBRA-like protein 4 (COBL4) from Arabidopsis thaliana (Mouse-ear cress).